The sequence spans 179 residues: MSRIGKNPIPIPDKVNVTLSGLAVTVKGPKGELKRTLPSGVSVNQVDNSIVVAPTSTKRSSRERHGLCRTLVANMVIGVSQGYSKKLEIVGVGSRAQVKGKTLVVSAGYSHPVEVVPPEGITFTVENNTNVTVSGTDKELVGNEAAKIRAIRPPEPYKGKGIKYAGERILRKAGKSGKK.

The protein belongs to the universal ribosomal protein uL6 family. Part of the 50S ribosomal subunit.

Its function is as follows. This protein binds to the 23S rRNA, and is important in its secondary structure. It is located near the subunit interface in the base of the L7/L12 stalk, and near the tRNA binding site of the peptidyltransferase center. The polypeptide is Large ribosomal subunit protein uL6 (Synechococcus sp. (strain CC9311)).